Reading from the N-terminus, the 292-residue chain is Phosphatidylglycerol--prolipoprotein diacylglyceryl transferase (292 aa).

3 consecutive transmembrane segments (helical) span residues 18–38 (LFGV…GLLI), 67–87 (LLTW…VLFY), and 105–125 (GGMS…AFCL). A 1,2-diacyl-sn-glycero-3-phospho-(1'-sn-glycerol) is bound at residue R150. The next 3 membrane-spanning stretches (helical) occupy residues 193 to 213 (QIYE…LLVW), 222 to 242 (GSVS…VEFV), and 266 to 286 (GLTM…YLIL).

This sequence belongs to the Lgt family.

It localises to the cell inner membrane. It carries out the reaction L-cysteinyl-[prolipoprotein] + a 1,2-diacyl-sn-glycero-3-phospho-(1'-sn-glycerol) = an S-1,2-diacyl-sn-glyceryl-L-cysteinyl-[prolipoprotein] + sn-glycerol 1-phosphate + H(+). It functions in the pathway protein modification; lipoprotein biosynthesis (diacylglyceryl transfer). Its function is as follows. Catalyzes the transfer of the diacylglyceryl group from phosphatidylglycerol to the sulfhydryl group of the N-terminal cysteine of a prolipoprotein, the first step in the formation of mature lipoproteins. This chain is Phosphatidylglycerol--prolipoprotein diacylglyceryl transferase, found in Cereibacter sphaeroides (strain ATCC 17023 / DSM 158 / JCM 6121 / CCUG 31486 / LMG 2827 / NBRC 12203 / NCIMB 8253 / ATH 2.4.1.) (Rhodobacter sphaeroides).